The following is a 348-amino-acid chain: NADH-quinone oxidoreductase subunit H (348 aa).

A run of 8 helical transmembrane segments spans residues 10-30 (LPFL…LVLV), 82-102 (GVFL…WAVI), 115-135 (VGLL…IMGG), 161-181 (IGFV…TTIV), 199-219 (FLDW…ISAL), 251-271 (LFFL…TILF), 287-307 (IPGV…FAIV), and 322-342 (LGWK…AAFL).

Belongs to the complex I subunit 1 family. NDH-1 is composed of 14 different subunits. Subunits NuoA, H, J, K, L, M, N constitute the membrane sector of the complex.

Its subcellular location is the cell inner membrane. It carries out the reaction a quinone + NADH + 5 H(+)(in) = a quinol + NAD(+) + 4 H(+)(out). NDH-1 shuttles electrons from NADH, via FMN and iron-sulfur (Fe-S) centers, to quinones in the respiratory chain. The immediate electron acceptor for the enzyme in this species is believed to be ubiquinone. Couples the redox reaction to proton translocation (for every two electrons transferred, four hydrogen ions are translocated across the cytoplasmic membrane), and thus conserves the redox energy in a proton gradient. This subunit may bind ubiquinone. The protein is NADH-quinone oxidoreductase subunit H of Bartonella tribocorum (strain CIP 105476 / IBS 506).